A 493-amino-acid polypeptide reads, in one-letter code: Cobyric acid synthase (493 aa).

Residues 261–455 (HTRIAVVAYP…LHGLFEDAAV (195 aa)) enclose the GATase cobBQ-type domain. The active-site Nucleophile is Cys-342. Residue His-447 is part of the active site.

Belongs to the CobB/CobQ family. CobQ subfamily.

It participates in cofactor biosynthesis; adenosylcobalamin biosynthesis. In terms of biological role, catalyzes amidations at positions B, D, E, and G on adenosylcobyrinic A,C-diamide. NH(2) groups are provided by glutamine, and one molecule of ATP is hydrogenolyzed for each amidation. The polypeptide is Cobyric acid synthase (Acidovorax sp. (strain JS42)).